The primary structure comprises 448 residues: T-box transcription factor TBX19 (448 aa).

The T-box DNA-binding region spans 45–218; the sequence is LEDAPLWQRF…YNPFAKAFLD (174 aa).

It is found in the nucleus. Functionally, transcriptional regulator involved in developmental processes. Can activate POMC gene expression and repress the alpha glycoprotein subunit and thyroid-stimulating hormone beta promoters. In Homo sapiens (Human), this protein is T-box transcription factor TBX19.